Consider the following 215-residue polypeptide: uncharacterized protein (215 aa).

Catalysis depends on charge relay system residues serine 114, aspartate 162, and histidine 194.

Belongs to the AB hydrolase superfamily. AB hydrolase 2 family.

This is an uncharacterized protein from Rickettsia felis (strain ATCC VR-1525 / URRWXCal2) (Rickettsia azadi).